The sequence spans 74 residues: Antimicrobial peptide 2 (74 aa).

The first 22 residues, 1-22 (MEIKYLLTVFLVLLIVSDHCQA), serve as a signal peptide directing secretion. At Lys-40 the chain carries Lysine amide. The propeptide occupies 46–74 (DLDGQIDRSRNFRKRDAELEELLSKLPIY).

As to expression, expressed by the venom gland.

The protein resides in the secreted. It localises to the target cell membrane. In terms of biological role, has antibacterial activity against the Gram-positive bacteria S.aureus (MIC=48 uM), the Gram-negative bacteria E.coli (MIC=120 uM), and the yeast C.albicans (MIC=64 uM). Causes hemolysis on horse erythrocytes. The chain is Antimicrobial peptide 2 from Androctonus amoreuxi (African fattail scorpion).